A 538-amino-acid chain; its full sequence is CTP synthase (538 aa).

The interval methionine 1–isoleucine 266 is amidoligase domain. Serine 14 is a CTP binding site. A UTP-binding site is contributed by serine 14. ATP is bound by residues serine 15–leucine 20 and aspartate 72. Residues aspartate 72 and glutamate 140 each coordinate Mg(2+). CTP-binding positions include aspartate 147–glutamate 149, lysine 187–glutamine 192, and lysine 223. UTP is bound by residues lysine 187–glutamine 192 and lysine 223. In terms of domain architecture, Glutamine amidotransferase type-1 spans histidine 292–lysine 534. Glycine 354 provides a ligand contact to L-glutamine. The active-site Nucleophile; for glutamine hydrolysis is cysteine 381. L-glutamine is bound by residues leucine 382–glutamine 385, glutamate 405, and arginine 462. Residues histidine 507 and glutamate 509 contribute to the active site.

Belongs to the CTP synthase family. In terms of assembly, homotetramer.

The enzyme catalyses UTP + L-glutamine + ATP + H2O = CTP + L-glutamate + ADP + phosphate + 2 H(+). It catalyses the reaction L-glutamine + H2O = L-glutamate + NH4(+). The catalysed reaction is UTP + NH4(+) + ATP = CTP + ADP + phosphate + 2 H(+). The protein operates within pyrimidine metabolism; CTP biosynthesis via de novo pathway; CTP from UDP: step 2/2. Its activity is regulated as follows. Allosterically activated by GTP, when glutamine is the substrate; GTP has no effect on the reaction when ammonia is the substrate. The allosteric effector GTP functions by stabilizing the protein conformation that binds the tetrahedral intermediate(s) formed during glutamine hydrolysis. Inhibited by the product CTP, via allosteric rather than competitive inhibition. Its function is as follows. Catalyzes the ATP-dependent amination of UTP to CTP with either L-glutamine or ammonia as the source of nitrogen. Regulates intracellular CTP levels through interactions with the four ribonucleotide triphosphates. In Geobacter metallireducens (strain ATCC 53774 / DSM 7210 / GS-15), this protein is CTP synthase.